We begin with the raw amino-acid sequence, 189 residues long: UPF0149 protein VFMJ11_2207 (189 aa).

This sequence belongs to the UPF0149 family.

The chain is UPF0149 protein VFMJ11_2207 from Aliivibrio fischeri (strain MJ11) (Vibrio fischeri).